The following is a 276-amino-acid chain: Putative olfactory receptor 10J6 (276 aa).

The Extracellular segment spans residues 1–25 (MRRKNLTEVTEFVFLGFSRFHKHHI). An N-linked (GlcNAc...) asparagine glycan is attached at asparagine 5. A helical transmembrane segment spans residues 26 to 46 (TLFVVFLILYTLTVAGNAIIM). Residues 47–54 (TIICIDRH) lie on the Cytoplasmic side of the membrane. A helical transmembrane segment spans residues 55-75 (LHTPMYFFLSMLASSKTVYTL). Over 76–99 (FIIPQMLSSFVTQTQPISLAGCTT) the chain is Extracellular. A disulfide bridge connects residues cysteine 97 and cysteine 188. The helical transmembrane segment at 100–120 (QTFFFVTLAINNCFLLTVMGY) threads the bilayer. Residues 121-139 (DHYMAICNPLRYRVITSKK) are Cytoplasmic-facing. Residues 140–160 (VCVQLVCGAFSIGLAMAAVQV) form a helical membrane-spanning segment. At 161–196 (TSIFTLPFCHTVVGHFFCDILPVMKLSCINTTINEI) the chain is on the extracellular side. A glycan (N-linked (GlcNAc...) asparagine) is linked at asparagine 190. Residues 197 to 216 (INFVVRLFVILVPMGLVFIS) traverse the membrane as a helical segment. At 217-236 (YVLIISTVLKIASAEGWKKT) the chain is on the cytoplasmic side. Residues 237–257 (FATCAFHLTVVIVHYGCASIA) traverse the membrane as a helical segment. At 258–270 (YLMPKSENSIEQD) the chain is on the extracellular side. Residues 271–276 (LLLSVT) traverse the membrane as a helical segment.

Belongs to the G-protein coupled receptor 1 family.

It is found in the cell membrane. In terms of biological role, odorant receptor. The chain is Putative olfactory receptor 10J6 (OR10J6P) from Homo sapiens (Human).